A 289-amino-acid chain; its full sequence is Probable endonuclease 4 (289 aa).

Positions 75, 115, 153, 187, 190, 224, 237, 239, and 269 each coordinate Zn(2+).

This sequence belongs to the AP endonuclease 2 family. Requires Zn(2+) as cofactor.

It catalyses the reaction Endonucleolytic cleavage to 5'-phosphooligonucleotide end-products.. Functionally, endonuclease IV plays a role in DNA repair. It cleaves phosphodiester bonds at apurinic or apyrimidinic (AP) sites, generating a 3'-hydroxyl group and a 5'-terminal sugar phosphate. The protein is Probable endonuclease 4 of Chlamydia abortus (strain DSM 27085 / S26/3) (Chlamydophila abortus).